The following is a 64-amino-acid chain: Large ribosomal subunit protein bL35 (64 aa).

The segment at 1-23 (MPKMKTHRGAAKRFKKTKNKIKR) is disordered.

This sequence belongs to the bacterial ribosomal protein bL35 family.

This Nitratiruptor sp. (strain SB155-2) protein is Large ribosomal subunit protein bL35.